Here is a 347-residue protein sequence, read N- to C-terminus: Protein RecA (347 aa).

64-71 contributes to the ATP binding site; sequence GPESSGKT.

The protein belongs to the RecA family.

The protein localises to the cytoplasm. Its function is as follows. Can catalyze the hydrolysis of ATP in the presence of single-stranded DNA, the ATP-dependent uptake of single-stranded DNA by duplex DNA, and the ATP-dependent hybridization of homologous single-stranded DNAs. It interacts with LexA causing its activation and leading to its autocatalytic cleavage. The polypeptide is Protein RecA (Bartonella quintana (strain Toulouse) (Rochalimaea quintana)).